We begin with the raw amino-acid sequence, 101 residues long: MHIGLTHYVVASGILFAIGLAGIILRRDLIVILMCLEIMLNAANLALVAFSRFNANLLGQVLVFFVITVAAAEVAVGLALIVALYRVKHTTKAEDITMLKF.

3 helical membrane passes run 5-25, 30-50, and 61-81; these read LTHY…GIIL, IVIL…LVAF, and VLVF…LALI.

Belongs to the complex I subunit 4L family. NDH-1 is composed of 14 different subunits. Subunits NuoA, H, J, K, L, M, N constitute the membrane sector of the complex.

Its subcellular location is the cell inner membrane. The enzyme catalyses a quinone + NADH + 5 H(+)(in) = a quinol + NAD(+) + 4 H(+)(out). Functionally, NDH-1 shuttles electrons from NADH, via FMN and iron-sulfur (Fe-S) centers, to quinones in the respiratory chain. The immediate electron acceptor for the enzyme in this species is believed to be ubiquinone. Couples the redox reaction to proton translocation (for every two electrons transferred, four hydrogen ions are translocated across the cytoplasmic membrane), and thus conserves the redox energy in a proton gradient. The protein is NADH-quinone oxidoreductase subunit K of Methylacidiphilum infernorum (isolate V4) (Methylokorus infernorum (strain V4)).